The sequence spans 147 residues: Small ribosomal subunit protein uS12 (147 aa).

Belongs to the universal ribosomal protein uS12 family. Part of the 30S ribosomal subunit.

With S4 and S5 plays an important role in translational accuracy. Located at the interface of the 30S and 50S subunits. This chain is Small ribosomal subunit protein uS12, found in Methanococcus maripaludis (strain C7 / ATCC BAA-1331).